Consider the following 510-residue polypeptide: Probable mannosyl-oligosaccharide alpha-1,2-mannosidase 1B (510 aa).

Positions 1–21 (MHFSSLSLPLTALSLVTPSLA) are cleaved as a signal peptide. N-linked (GlcNAc...) asparagine glycans are attached at residues N35, N95, N182, and N249. Cysteines 332 and 361 form a disulfide. N366 carries N-linked (GlcNAc...) asparagine glycosylation. The active-site Proton donor is the E375. A Ca(2+)-binding site is contributed by T501.

Belongs to the glycosyl hydrolase 47 family. Monomer. Ca(2+) serves as cofactor. The cofactor is Mg(2+).

The protein localises to the cytoplasmic vesicle lumen. The enzyme catalyses N(4)-(alpha-D-Man-(1-&gt;2)-alpha-D-Man-(1-&gt;2)-alpha-D-Man-(1-&gt;3)-[alpha-D-Man-(1-&gt;2)-alpha-D-Man-(1-&gt;3)-[alpha-D-Man-(1-&gt;2)-alpha-D-Man-(1-&gt;6)]-alpha-D-Man-(1-&gt;6)]-beta-D-Man-(1-&gt;4)-beta-D-GlcNAc-(1-&gt;4)-beta-D-GlcNAc)-L-asparaginyl-[protein] (N-glucan mannose isomer 9A1,2,3B1,2,3) + 4 H2O = N(4)-(alpha-D-Man-(1-&gt;3)-[alpha-D-Man-(1-&gt;3)-[alpha-D-Man-(1-&gt;6)]-alpha-D-Man-(1-&gt;6)]-beta-D-Man-(1-&gt;4)-beta-D-GlcNAc-(1-&gt;4)-beta-D-GlcNAc)-L-asparaginyl-[protein] (N-glucan mannose isomer 5A1,2) + 4 beta-D-mannose. The catalysed reaction is N(4)-(alpha-D-Man-(1-&gt;2)-alpha-D-Man-(1-&gt;2)-alpha-D-Man-(1-&gt;3)-[alpha-D-Man-(1-&gt;3)-[alpha-D-Man-(1-&gt;2)-alpha-D-Man-(1-&gt;6)]-alpha-D-Man-(1-&gt;6)]-beta-D-Man-(1-&gt;4)-beta-D-GlcNAc-(1-&gt;4)-beta-D-GlcNAc)-L-asparaginyl-[protein] (N-glucan mannose isomer 8A1,2,3B1,3) + 3 H2O = N(4)-(alpha-D-Man-(1-&gt;3)-[alpha-D-Man-(1-&gt;3)-[alpha-D-Man-(1-&gt;6)]-alpha-D-Man-(1-&gt;6)]-beta-D-Man-(1-&gt;4)-beta-D-GlcNAc-(1-&gt;4)-beta-D-GlcNAc)-L-asparaginyl-[protein] (N-glucan mannose isomer 5A1,2) + 3 beta-D-mannose. It participates in protein modification; protein glycosylation. Functionally, involved in the maturation of Asn-linked oligosaccharides. Progressively trims alpha-1,2-linked mannose residues from Man(9)GlcNAc(2) to produce Man(5)GlcNAc(2). The chain is Probable mannosyl-oligosaccharide alpha-1,2-mannosidase 1B (mns1B) from Aspergillus flavus (strain ATCC 200026 / FGSC A1120 / IAM 13836 / NRRL 3357 / JCM 12722 / SRRC 167).